A 120-amino-acid chain; its full sequence is UPF0344 protein LMHCC_0278 (120 aa).

4 helical membrane-spanning segments follow: residues 3-23 (GYIH…ALLI), 33-53 (MLQM…IMMV), 62-82 (ILAI…EMLL), and 92-112 (GMFL…GFYL).

The protein belongs to the UPF0344 family.

It localises to the cell membrane. The protein is UPF0344 protein LMHCC_0278 of Listeria monocytogenes serotype 4a (strain HCC23).